The chain runs to 166 residues: Large ribosomal subunit protein uL10 (166 aa).

This sequence belongs to the universal ribosomal protein uL10 family. As to quaternary structure, part of the ribosomal stalk of the 50S ribosomal subunit. The N-terminus interacts with L11 and the large rRNA to form the base of the stalk. The C-terminus forms an elongated spine to which L12 dimers bind in a sequential fashion forming a multimeric L10(L12)X complex.

Forms part of the ribosomal stalk, playing a central role in the interaction of the ribosome with GTP-bound translation factors. In Shewanella denitrificans (strain OS217 / ATCC BAA-1090 / DSM 15013), this protein is Large ribosomal subunit protein uL10.